Reading from the N-terminus, the 193-residue chain is Corrinoid adenosyltransferase (193 aa).

ATP-binding positions include 10-18 (TRTGDDGTT), Lys-28, 137-142 (RRAERS), and Asn-163.

It belongs to the Cob(I)alamin adenosyltransferase family.

The protein resides in the cytoplasm. It catalyses the reaction 2 cob(II)yrinate a,c diamide + reduced [electron-transfer flavoprotein] + 2 ATP = 2 adenosylcob(III)yrinate a,c-diamide + 2 triphosphate + oxidized [electron-transfer flavoprotein] + 3 H(+). The enzyme catalyses 2 cob(II)alamin + reduced [electron-transfer flavoprotein] + 2 ATP = 2 adenosylcob(III)alamin + 2 triphosphate + oxidized [electron-transfer flavoprotein] + 3 H(+). The protein operates within cofactor biosynthesis; adenosylcobalamin biosynthesis; adenosylcobalamin from cob(II)yrinate a,c-diamide: step 2/7. The sequence is that of Corrinoid adenosyltransferase from Mycobacterium bovis (strain ATCC BAA-935 / AF2122/97).